Reading from the N-terminus, the 258-residue chain is Synapse differentiation-inducing gene protein 1 (258 aa).

Over 1-181 the chain is Cytoplasmic; that stretch reads MDGIIEQKSV…NFLMMPPRDH (181 aa). Serine 137 carries the post-translational modification Phosphoserine. A helical transmembrane segment spans residues 182–202; it reads LGLSVFSMLCCFWPLGIAAFY. Residues 203–228 are Extracellular-facing; it reads LSHETNKAVAKGDFHQASTSSRRALF. An intramembrane region (helical) is located at residues 229-249; it reads LAVLSITIGTGIYVGVAVALI. At 250 to 258 the chain is on the extracellular side; sequence AYLSKNNHL.

It belongs to the CD225/Dispanin family. In terms of assembly, homodimer. Interacts with GRIA1 and GRIA2. Brain-specific. Expressed in Purkinje neurons in cerebellum. Also detected in the hippocampus. Found at excitatory synapses and postsynaptic cells.

It localises to the cell membrane. The protein localises to the early endosome membrane. The protein resides in the postsynaptic density membrane. It is found in the synapse. Its subcellular location is the cell projection. It localises to the dendrite. The protein localises to the dendritic spine. May regulate AMPA receptor content at nascent synapses, and have a role in postsynaptic development and maturation. The sequence is that of Synapse differentiation-inducing gene protein 1 (Syndig1) from Mus musculus (Mouse).